The following is a 201-amino-acid chain: Elongation factor Ts (201 aa).

Residues 83–86 are involved in Mg(2+) ion dislocation from EF-Tu; sequence TDFV.

The protein belongs to the EF-Ts family.

It localises to the cytoplasm. Functionally, associates with the EF-Tu.GDP complex and induces the exchange of GDP to GTP. It remains bound to the aminoacyl-tRNA.EF-Tu.GTP complex up to the GTP hydrolysis stage on the ribosome. The sequence is that of Elongation factor Ts from Methylacidiphilum infernorum (isolate V4) (Methylokorus infernorum (strain V4)).